Reading from the N-terminus, the 431-residue chain is MGTNVVVVGTQWGDEGKGKIVDWLTENAGVVARFQGGHNAGHTLVIDGEQTVLHLIPSGILREDATCVIGNGVVLSAEALLEEIRELEARGVPARERLRISPSCPLILPCHVALDHAREKAKGKAAIGTTGRGIGPAYEDKVARRGVRLSDLFHRERLAQKLGELLDYHNFVLKHYFGAPTMDFQEVLDQALAHGEELRPLTADVGALLTAEMRTGRNILFEGAQGTLLDIDHGTYPFVTSSNTCAGAAAAGTGVGPRTLDYILGITKAYTTRVGQGPFPTELDFDDEMGMHLGERGHEFGATTGRQRRCGWFDAVATRRAAQINSLSGLCITKLDVLDGLETLRLCVGYRCQGELCETLPSEVETLSECEPVYEDMPGWAESTSGIERYEDLPENARAYLGRIEELVGVPVAMISTGPDRNETIVRQSPF.

GTP contacts are provided by residues 13-19 (GDEGKGK) and 41-43 (GHT). The Proton acceptor role is filled by D14. Residues D14 and G41 each coordinate Mg(2+). IMP contacts are provided by residues 14-17 (DEGK), 39-42 (NAGH), T130, R144, Q225, T240, and R306. The active-site Proton donor is H42. Residue 302 to 308 (ATTGRQR) coordinates substrate. GTP is bound by residues R308, 334–336 (KLD), and 416–418 (STG).

It belongs to the adenylosuccinate synthetase family. As to quaternary structure, homodimer. Mg(2+) serves as cofactor.

The protein resides in the cytoplasm. It catalyses the reaction IMP + L-aspartate + GTP = N(6)-(1,2-dicarboxyethyl)-AMP + GDP + phosphate + 2 H(+). The protein operates within purine metabolism; AMP biosynthesis via de novo pathway; AMP from IMP: step 1/2. Its function is as follows. Plays an important role in the de novo pathway of purine nucleotide biosynthesis. Catalyzes the first committed step in the biosynthesis of AMP from IMP. The chain is Adenylosuccinate synthetase from Halorhodospira halophila (strain DSM 244 / SL1) (Ectothiorhodospira halophila (strain DSM 244 / SL1)).